Here is a 1204-residue protein sequence, read N- to C-terminus: Cingulin (1204 aa).

A head region spans residues 7–357 (MAEPRGPVDH…GVISSGSSKA (351 aa)). Residues 25-48 (EPVSGAEMGTLRRGGRRPAKDARA) are disordered. The short motif at 48–62 (ASTYGVAVRVQGIAG) is the ZIM element. The segment at 54–67 (AVRVQGIAGQPFVV) is interaction with TJP1/ZO1. Disordered stretches follow at residues 68–174 (LNSG…DTAP) and 186–266 (DGQL…FSRA). Residues 93–119 (ALSSDSELPENPYSQVQGFPAPSQSST) show a composition bias toward polar residues. Phosphoserine is present on residues serine 95, serine 96, serine 98, serine 135, serine 137, serine 140, serine 155, serine 165, serine 214, and serine 217. Positions 207-231 (EQRKRSKSLDSRLPRDTLEERERQS) are enriched in basic and acidic residues. The segment covering 232 to 245 (TNHWNPSTKYNNHV) has biased composition (polar residues). Low complexity predominate over residues 247-261 (SLKQPAQSPSPSPLS). Serine 258, serine 276, serine 338, and serine 351 each carry phosphoserine. Residues 358–1161 (MAGQGELARK…SLEKDSWRKA (804 aa)) adopt a coiled-coil conformation. The interval 379–398 (VKKRQKLEPSRAGLERQLEE) is disordered. Lysine 579 is modified (N6-acetyllysine). The tract at residues 1161–1182 (ASRSAAESALKHEGLSSDEEFD) is disordered. Residues 1162–1204 (SRSAAESALKHEGLSSDEEFDSVYDPSSIASLLTESNLQTSSC) are tail. 3 positions are modified to phosphoserine: serine 1176, serine 1177, and serine 1183.

Belongs to the cingulin family. Homodimer. Interacts with TJP1/ZO1 and SPEF1.

Its subcellular location is the cell junction. The protein resides in the tight junction. In terms of biological role, probably plays a role in the formation and regulation of the tight junction (TJ) paracellular permeability barrier. The polypeptide is Cingulin (Plecturocebus moloch (Dusky titi monkey)).